A 431-amino-acid chain; its full sequence is IMP-specific 5'-nucleotidase 1 (431 aa).

K117 contacts ATP. The active-site Nucleophile is the D157. IMP-binding residues include D157, D159, D165, T193, D349, and K357. Residues D157 and D159 each contribute to the Mg(2+) site. The active-site Proton donor is the D159. D388 provides a ligand contact to Mg(2+).

It belongs to the ISN1 family. In terms of assembly, homotetramer. Requires Mg(2+) as cofactor.

The catalysed reaction is IMP + H2O = inosine + phosphate. Allosterically activated by ATP. ATP binding is a prerequisite to magnesium and substrate binding. ATP binds to 2 of the subunits in the homotetramer inducing a closure of these 2 subunits and the release of the C-terminal loop, thereby activating the enzyme. Its function is as follows. IMP-specific 5'-nucleotidase involved in IMP (inositol monophosphate) degradation. This is IMP-specific 5'-nucleotidase 1 (isn-1) from Neurospora crassa (strain ATCC 24698 / 74-OR23-1A / CBS 708.71 / DSM 1257 / FGSC 987).